The chain runs to 743 residues: Catalase-peroxidase (743 aa).

The interval 1-22 (MEKQSNDAAVAGAPNDHGAAKC) is disordered. The tryptophyl-tyrosyl-methioninium (Trp-Tyr) (with M-253) cross-link spans 105–227 (WHSAGTYRIT…LGAVQMGLIY (123 aa)). The active-site Proton acceptor is the H106. A cross-link (tryptophyl-tyrosyl-methioninium (Tyr-Met) (with W-105)) is located at residues 227 to 253 (YVNPEGPNGNPDPVAAAKDIRETFFRM). H268 provides a ligand contact to heme b.

This sequence belongs to the peroxidase family. Peroxidase/catalase subfamily. Homodimer or homotetramer. Heme b serves as cofactor. Post-translationally, formation of the three residue Trp-Tyr-Met cross-link is important for the catalase, but not the peroxidase activity of the enzyme.

The catalysed reaction is H2O2 + AH2 = A + 2 H2O. It carries out the reaction 2 H2O2 = O2 + 2 H2O. Its function is as follows. Bifunctional enzyme with both catalase and broad-spectrum peroxidase activity. In Solibacter usitatus (strain Ellin6076), this protein is Catalase-peroxidase.